The following is a 467-amino-acid chain: ATP synthase subunit beta (467 aa).

Residue Gly156 to Thr163 participates in ATP binding.

It belongs to the ATPase alpha/beta chains family. F-type ATPases have 2 components, CF(1) - the catalytic core - and CF(0) - the membrane proton channel. CF(1) has five subunits: alpha(3), beta(3), gamma(1), delta(1), epsilon(1). CF(0) has three main subunits: a(1), b(2) and c(9-12). The alpha and beta chains form an alternating ring which encloses part of the gamma chain. CF(1) is attached to CF(0) by a central stalk formed by the gamma and epsilon chains, while a peripheral stalk is formed by the delta and b chains.

It is found in the cell inner membrane. It carries out the reaction ATP + H2O + 4 H(+)(in) = ADP + phosphate + 5 H(+)(out). Produces ATP from ADP in the presence of a proton gradient across the membrane. The catalytic sites are hosted primarily by the beta subunits. The polypeptide is ATP synthase subunit beta (Cupriavidus pinatubonensis (strain JMP 134 / LMG 1197) (Cupriavidus necator (strain JMP 134))).